The primary structure comprises 141 residues: Large ribosomal subunit protein uL16 (141 aa).

The interval 1-23 (MLMPKRTKWRKQQKGRNRGKSFR) is disordered.

The protein belongs to the universal ribosomal protein uL16 family. As to quaternary structure, part of the 50S ribosomal subunit.

Functionally, binds 23S rRNA and is also seen to make contacts with the A and possibly P site tRNAs. The chain is Large ribosomal subunit protein uL16 from Sulfurovum sp. (strain NBC37-1).